The primary structure comprises 145 residues: MPHILILNGPNLNRLGKREPDVYGTDTLTDLEQRLFQFAEGIQTELTFFQSNHEGDLIDALHEAEEQYDGIVLNPGAFSHYSYALRDAVAAISIPVIEVHLSNPHAREEFRHRSVIAPVARGQITGLGFEGYKLAISYFMNTNNK.

Tyr23 functions as the Proton acceptor in the catalytic mechanism. Positions 74, 80, and 87 each coordinate substrate. The active-site Proton donor is the His100. Substrate contacts are provided by residues 101–102 (LS) and Arg111.

The protein belongs to the type-II 3-dehydroquinase family. Homododecamer.

It catalyses the reaction 3-dehydroquinate = 3-dehydroshikimate + H2O. Its pathway is metabolic intermediate biosynthesis; chorismate biosynthesis; chorismate from D-erythrose 4-phosphate and phosphoenolpyruvate: step 3/7. Catalyzes a trans-dehydration via an enolate intermediate. This chain is 3-dehydroquinate dehydratase, found in Bacillus licheniformis (strain ATCC 14580 / DSM 13 / JCM 2505 / CCUG 7422 / NBRC 12200 / NCIMB 9375 / NCTC 10341 / NRRL NRS-1264 / Gibson 46).